We begin with the raw amino-acid sequence, 338 residues long: Glyceraldehyde-3-phosphate dehydrogenase, cytosolic (338 aa).

NAD(+) contacts are provided by residues 14–15 (RI), Asp36, and Arg83. Residues 154–156 (SCT), Thr185, 214–215 (TG), and Arg237 contribute to the D-glyceraldehyde 3-phosphate site. Cys155 functions as the Nucleophile in the catalytic mechanism. Position 319 (Asn319) interacts with NAD(+).

This sequence belongs to the glyceraldehyde-3-phosphate dehydrogenase family. As to quaternary structure, homotetramer.

It is found in the cytoplasm. The enzyme catalyses D-glyceraldehyde 3-phosphate + phosphate + NAD(+) = (2R)-3-phospho-glyceroyl phosphate + NADH + H(+). The protein operates within carbohydrate degradation; glycolysis; pyruvate from D-glyceraldehyde 3-phosphate: step 1/5. In terms of biological role, key enzyme in glycolysis that catalyzes the first step of the pathway by converting D-glyceraldehyde 3-phosphate (G3P) into 3-phospho-D-glyceroyl phosphate. Essential for the maintenance of cellular ATP levels and carbohydrate metabolism. This is Glyceraldehyde-3-phosphate dehydrogenase, cytosolic (GAPC) from Ranunculus acris (Meadow buttercup).